The primary structure comprises 573 residues: Urease subunit alpha (573 aa).

One can recognise a Urease domain in the interval 136–573 (GAIDCHVHLI…LPMAQRYFLF (438 aa)). H141, H143, and K224 together coordinate Ni(2+). An N6-carboxylysine modification is found at K224. H226 provides a ligand contact to substrate. Ni(2+) contacts are provided by H253 and H279. H327 serves as the catalytic Proton donor. D367 is a Ni(2+) binding site.

Belongs to the metallo-dependent hydrolases superfamily. Urease alpha subunit family. Heterotrimer of UreA (gamma), UreB (beta) and UreC (alpha) subunits. Three heterotrimers associate to form the active enzyme. The cofactor is Ni cation. In terms of processing, carboxylation allows a single lysine to coordinate two nickel ions.

Its subcellular location is the cytoplasm. The enzyme catalyses urea + 2 H2O + H(+) = hydrogencarbonate + 2 NH4(+). Its pathway is nitrogen metabolism; urea degradation; CO(2) and NH(3) from urea (urease route): step 1/1. The protein is Urease subunit alpha of Mycobacterium sp. (strain JLS).